We begin with the raw amino-acid sequence, 318 residues long: L-lactate dehydrogenase (318 aa).

Residues Val-18, Asp-39, Lys-44, Tyr-69, and 83–84 each bind NAD(+); that span reads GA. The substrate site is built by Gln-86 and Arg-92. NAD(+) contacts are provided by residues Ser-105, 122–124, and Ser-147; that span reads VSN. 124-127 lines the substrate pocket; that stretch reads NPVD. 152–155 lines the substrate pocket; sequence DTSR. Catalysis depends on His-179, which acts as the Proton acceptor. The residue at position 225 (Tyr-225) is a Phosphotyrosine. Substrate is bound at residue Thr-234.

Belongs to the LDH/MDH superfamily. LDH family. Homotetramer.

It localises to the cytoplasm. The enzyme catalyses (S)-lactate + NAD(+) = pyruvate + NADH + H(+). Its pathway is fermentation; pyruvate fermentation to lactate; (S)-lactate from pyruvate: step 1/1. Catalyzes the conversion of lactate to pyruvate. The chain is L-lactate dehydrogenase from Clostridium botulinum (strain Langeland / NCTC 10281 / Type F).